A 320-amino-acid chain; its full sequence is Cytochrome f (320 aa).

The first 35 residues, 1-35, serve as a signal peptide directing secretion; that stretch reads MENRNTFSWVKEQMTRSISVSIMIYVITRTSISNA. 4 residues coordinate heme: Tyr-36, Cys-56, Cys-59, and His-60. A helical membrane pass occupies residues 286–306; sequence VQGLLFFFASVILAQVFLVLK.

This sequence belongs to the cytochrome f family. As to quaternary structure, the 4 large subunits of the cytochrome b6-f complex are cytochrome b6, subunit IV (17 kDa polypeptide, petD), cytochrome f and the Rieske protein, while the 4 small subunits are PetG, PetL, PetM and PetN. The complex functions as a dimer. Heme serves as cofactor.

Its subcellular location is the plastid. The protein localises to the chloroplast thylakoid membrane. Its function is as follows. Component of the cytochrome b6-f complex, which mediates electron transfer between photosystem II (PSII) and photosystem I (PSI), cyclic electron flow around PSI, and state transitions. The polypeptide is Cytochrome f (Oryza nivara (Indian wild rice)).